Reading from the N-terminus, the 345-residue chain is MKVALLMSGGVDSSYCAHLLSSQGYEVIGIYLKLHDKNKKHDIYIANCEQVAAHLHIDFQVLDLREEFKKSVYDTFVSSYKEGKTPNPCAICNPLMKFGLGLQKALELGCDYIATGHYAQIKEVNGIKRIAKAVDESKDQSYFLYALPQEAIDRIIFPLGALLKEDIKKTALELLPFLGTLQTYKESQEICFVEQSYIDILKLHDKVDNEGVVRNSNGKAIGTHKGYMHYTIGKRKGFSVFGSHEPHYVKAINPQNNEIVVGTKEELAIDSIKALNKSLPQAFNGGIYDVKVRYRSTPLKAQIDIQGEFIYAKLLESAYGVAQGQALVLYQEDCVLGGGVITQAQ.

ATP-binding positions include 6-13 (LMSGGVDS) and leucine 32. Catalysis depends on cysteine 92, which acts as the Nucleophile. Cysteine 92 and cysteine 191 form a disulfide bridge. Residue glycine 116 participates in ATP binding. The tract at residues 138–140 (KDQ) is interaction with tRNA. The Cysteine persulfide intermediate role is filled by cysteine 191. The interaction with tRNA stretch occupies residues 293-294 (RY).

Belongs to the MnmA/TRMU family.

The protein localises to the cytoplasm. It catalyses the reaction S-sulfanyl-L-cysteinyl-[protein] + uridine(34) in tRNA + AH2 + ATP = 2-thiouridine(34) in tRNA + L-cysteinyl-[protein] + A + AMP + diphosphate + H(+). Functionally, catalyzes the 2-thiolation of uridine at the wobble position (U34) of tRNA, leading to the formation of s(2)U34. The protein is tRNA-specific 2-thiouridylase MnmA of Helicobacter hepaticus (strain ATCC 51449 / 3B1).